The sequence spans 239 residues: 1-(5-phosphoribosyl)-5-[(5-phosphoribosylamino)methylideneamino] imidazole-4-carboxamide isomerase (239 aa).

D8 acts as the Proton acceptor in catalysis. D129 functions as the Proton donor in the catalytic mechanism.

It belongs to the HisA/HisF family.

The protein localises to the cytoplasm. The catalysed reaction is 1-(5-phospho-beta-D-ribosyl)-5-[(5-phospho-beta-D-ribosylamino)methylideneamino]imidazole-4-carboxamide = 5-[(5-phospho-1-deoxy-D-ribulos-1-ylimino)methylamino]-1-(5-phospho-beta-D-ribosyl)imidazole-4-carboxamide. It participates in amino-acid biosynthesis; L-histidine biosynthesis; L-histidine from 5-phospho-alpha-D-ribose 1-diphosphate: step 4/9. This Cereibacter sphaeroides (strain ATCC 17025 / ATH 2.4.3) (Rhodobacter sphaeroides) protein is 1-(5-phosphoribosyl)-5-[(5-phosphoribosylamino)methylideneamino] imidazole-4-carboxamide isomerase.